A 417-amino-acid chain; its full sequence is Guanine nucleotide-exchange factor SEC12 (417 aa).

Residues 1–388 (MGRRRGVELY…QLHLLPSRRS (388 aa)) lie on the Cytoplasmic side of the membrane. A 3'-nitrotyrosine modification is found at Tyr10. Residues 101 to 135 (KGSKAEKSGSKEQGPRQRKGAAPAEKKSGAEVHPE) are disordered. Basic and acidic residues-rich tracts occupy residues 103–115 (SKAE…EQGP) and 124–135 (AEKKSGAEVHPE). WD repeat units follow at residues 152 to 191 (STEP…KVLE), 194 to 232 (AHEG…TQLQ), and 298 to 337 (CGHE…RLYY). The chain crosses the membrane as a helical span at residues 389–409 (VPVWLLLLLCVGLIIVTILLL). The Lumenal segment spans residues 410-417 (QSAFPGFL).

Interacts with SAR1B (GDP-bound form). Interacts with MIA2; recruits PREB to endoplasmic reticulum exit sites. Interacts with CIDEB; facilitating loading of SCAP-SREBP into COPII vesicles.

It localises to the endoplasmic reticulum membrane. Its subcellular location is the nucleus. Guanine nucleotide exchange factor (GEF) that regulates the assembly of the coat protein complex II/COPII in endoplasmic reticulum (ER) to Golgi vesicle-mediated transport. Selectively activates SAR1A and SAR1B by promoting the exchange of guanosine diphosphate (GDP) for guanosine triphosphate (GTP) in these small GTPases. In their activated GTP-bound state, SAR1A and SAR1B insert into the membrane of the endoplasmic reticulum where they recruit the remainder of the coat protein complex II/COPII which is responsible for both the sorting of proteins and the deformation and budding of membranes into vesicles destined to the Golgi. Functionally, was first identified based on its probable role in the regulation of pituitary gene transcription. Binds to the prolactin gene (PRL) promoter and seems to activate transcription. The polypeptide is Guanine nucleotide-exchange factor SEC12 (Rattus norvegicus (Rat)).